A 107-amino-acid polypeptide reads, in one-letter code: Glutaredoxin-1 (107 aa).

Alanine 2 is subject to N-acetylalanine. One can recognise a Glutaredoxin domain in the interval 3–106 (QEFVNCKIQS…TRLKQIGALQ (104 aa)). Position 9 is an N6-succinyllysine (lysine 9). Intrachain disulfides connect cysteine 23-cysteine 26 and cysteine 79-cysteine 83.

The protein belongs to the glutaredoxin family.

It localises to the cytoplasm. Its function is as follows. Has a glutathione-disulfide oxidoreductase activity in the presence of NADPH and glutathione reductase. Reduces low molecular weight disulfides and proteins. The chain is Glutaredoxin-1 (Glrx) from Mus musculus (Mouse).